The chain runs to 215 residues: Ras-related protein Rab-5B (215 aa).

Position 2 is an N-acetylthreonine (T2). Residues S29, A30, G32, K33, S34, S35, H46, E47, T52, and G78 each coordinate GTP. S34 contacts Mg(2+). 2 short sequence motifs (switch) span residues 44-56 (QFHEYQESTIGAA) and 77-93 (AGQERYHSLAPMYYRGA). T52 provides a ligand contact to Mg(2+). S84 carries the phosphoserine; by LRRK2 modification. 5 residues coordinate GTP: N133, K134, D136, A164, and K165. The disordered stretch occupies residues 186–215 (PQNLGGAAGRSRGVDLHEQSQQNKSQCCSN). A compositionally biased stretch (low complexity) spans 204 to 215 (QSQQNKSQCCSN). S-geranylgeranyl cysteine attachment occurs at residues C212 and C213.

This sequence belongs to the small GTPase superfamily. Rab family. Binds EEA1. Interacts with RIN2 and RIN3, which probably regulate its pathway, possibly by acting as GEFs. Interacts with GDI1, GDI2, CHML and CHM; phosphorylation at Ser-84 disrupts this interaction. Mg(2+) serves as cofactor. In terms of processing, phosphorylation of Ser-84 in the switch II region by LRRK2 prevents the association of RAB regulatory proteins, including CHM, CHML and RAB GDP dissociation inhibitors GDI1 and GDI2. Post-translationally, (Microbial infection) Glycosylated on arginine residues by S.typhimurium protein Ssek3.

Its subcellular location is the cell membrane. The protein localises to the early endosome membrane. It is found in the melanosome. The enzyme catalyses GTP + H2O = GDP + phosphate + H(+). Regulated by guanine nucleotide exchange factors (GEFs) which promote the exchange of bound GDP for free GTP. Regulated by GTPase activating proteins (GAPs) which increase the GTP hydrolysis activity. Inhibited by GDP dissociation inhibitors (GDIs). Functionally, the small GTPases Rab are key regulators of intracellular membrane trafficking, from the formation of transport vesicles to their fusion with membranes. Rabs cycle between an inactive GDP-bound form and an active GTP-bound form that is able to recruit to membranes different sets of downstream effectors directly responsible for vesicle formation, movement, tethering and fusion. The protein is Ras-related protein Rab-5B of Homo sapiens (Human).